The following is a 102-amino-acid chain: MAKQKIRIRLKAYEHRILDQSADKIVETAKRTGAQISGPIPLPTERTIYTVIRSPHKFKKSREQFEMRTHKRLIDIVDPTPKTVDSLMKLDLPSGVDIEIKL.

It belongs to the universal ribosomal protein uS10 family. In terms of assembly, part of the 30S ribosomal subunit.

Its function is as follows. Involved in the binding of tRNA to the ribosomes. The protein is Small ribosomal subunit protein uS10 of Limosilactobacillus reuteri (strain DSM 20016) (Lactobacillus reuteri).